The primary structure comprises 122 residues: Small ribosomal subunit protein uS13 (122 aa).

Residues 97–122 (PVRGQRTRTNARTRKGPRKTVAKKKK) are disordered. Over residues 101–122 (QRTRTNARTRKGPRKTVAKKKK) the composition is skewed to basic residues.

Belongs to the universal ribosomal protein uS13 family. As to quaternary structure, part of the 30S ribosomal subunit. Forms a loose heterodimer with protein S19. Forms two bridges to the 50S subunit in the 70S ribosome.

Located at the top of the head of the 30S subunit, it contacts several helices of the 16S rRNA. In the 70S ribosome it contacts the 23S rRNA (bridge B1a) and protein L5 of the 50S subunit (bridge B1b), connecting the 2 subunits; these bridges are implicated in subunit movement. Contacts the tRNAs in the A and P-sites. The sequence is that of Small ribosomal subunit protein uS13 from Caldanaerobacter subterraneus subsp. tengcongensis (strain DSM 15242 / JCM 11007 / NBRC 100824 / MB4) (Thermoanaerobacter tengcongensis).